A 412-amino-acid polypeptide reads, in one-letter code: Mast cell carboxypeptidase A (412 aa).

Residues 1 to 10 form the signal peptide; that stretch reads LMGVIYSTLA. A propeptide spans 11-104 (activation peptide); that stretch reads IAPVQFDREK…IDKQFDVKEE (94 aa). The 295-residue stretch at 113–407 folds into the Peptidase M14 domain; the sequence is KYNDWNKIVS…LSVKFIAKYI (295 aa). Disulfide bonds link cysteine 168/cysteine 181 and cysteine 240/cysteine 263. Residues histidine 171 and glutamate 174 each coordinate Zn(2+). Residue histidine 299 coordinates Zn(2+). Catalysis depends on glutamate 373, which acts as the Proton donor/acceptor.

Belongs to the peptidase M14 family. Zn(2+) is required as a cofactor.

It localises to the cytoplasmic vesicle. It is found in the secretory vesicle. It carries out the reaction Release of a C-terminal amino acid, but little or no action with -Asp, -Glu, -Arg, -Lys or -Pro.. The polypeptide is Mast cell carboxypeptidase A (Cpa3) (Rattus norvegicus (Rat)).